The chain runs to 344 residues: Putative cyclin-Y-like protein 3 (344 aa).

A Cyclin N-terminal domain is found at 40 to 170 (ERYANRSLAI…FLELLEFNIH (131 aa)).

It belongs to the cyclin family. Cyclin Y subfamily.

The polypeptide is Putative cyclin-Y-like protein 3 (CCNYL3) (Homo sapiens (Human)).